Here is a 400-residue protein sequence, read N- to C-terminus: Tyrosine--tRNA ligase (400 aa).

Positions 42-51 (PTAPDLHLGH) match the 'HIGH' region motif. Positions 226 to 230 (KMSKS) match the 'KMSKS' region motif. ATP is bound at residue Lys-229. In terms of domain architecture, S4 RNA-binding spans 339 to 399 (FSISYILRRA…GKKKIAQIFV (61 aa)).

The protein belongs to the class-I aminoacyl-tRNA synthetase family. TyrS type 2 subfamily. As to quaternary structure, homodimer.

The protein resides in the cytoplasm. The catalysed reaction is tRNA(Tyr) + L-tyrosine + ATP = L-tyrosyl-tRNA(Tyr) + AMP + diphosphate + H(+). Catalyzes the attachment of tyrosine to tRNA(Tyr) in a two-step reaction: tyrosine is first activated by ATP to form Tyr-AMP and then transferred to the acceptor end of tRNA(Tyr). The sequence is that of Tyrosine--tRNA ligase from Hahella chejuensis (strain KCTC 2396).